A 208-amino-acid polypeptide reads, in one-letter code: ATP-dependent Clp protease proteolytic subunit (208 aa).

S105 serves as the catalytic Nucleophile. H130 is an active-site residue.

This sequence belongs to the peptidase S14 family. As to quaternary structure, fourteen ClpP subunits assemble into 2 heptameric rings which stack back to back to give a disk-like structure with a central cavity, resembling the structure of eukaryotic proteasomes.

The protein resides in the cytoplasm. It carries out the reaction Hydrolysis of proteins to small peptides in the presence of ATP and magnesium. alpha-casein is the usual test substrate. In the absence of ATP, only oligopeptides shorter than five residues are hydrolyzed (such as succinyl-Leu-Tyr-|-NHMec, and Leu-Tyr-Leu-|-Tyr-Trp, in which cleavage of the -Tyr-|-Leu- and -Tyr-|-Trp bonds also occurs).. Cleaves peptides in various proteins in a process that requires ATP hydrolysis. Has a chymotrypsin-like activity. Plays a major role in the degradation of misfolded proteins. This is ATP-dependent Clp protease proteolytic subunit from Xanthomonas axonopodis pv. citri (strain 306).